The primary structure comprises 432 residues: 3-phosphoshikimate 1-carboxyvinyltransferase (432 aa).

Residues Lys-22, Ser-23, and Arg-27 each coordinate 3-phosphoshikimate. Lys-22 contacts phosphoenolpyruvate. The phosphoenolpyruvate site is built by Gly-96 and Arg-127. 3-phosphoshikimate is bound by residues Ser-173, Ser-174, Gln-175, Ser-201, Asp-316, Asn-339, and Lys-343. Gln-175 provides a ligand contact to phosphoenolpyruvate. The active-site Proton acceptor is Asp-316. Positions 347, 391, and 416 each coordinate phosphoenolpyruvate.

This sequence belongs to the EPSP synthase family. In terms of assembly, monomer.

The protein localises to the cytoplasm. The catalysed reaction is 3-phosphoshikimate + phosphoenolpyruvate = 5-O-(1-carboxyvinyl)-3-phosphoshikimate + phosphate. Its pathway is metabolic intermediate biosynthesis; chorismate biosynthesis; chorismate from D-erythrose 4-phosphate and phosphoenolpyruvate: step 6/7. Functionally, catalyzes the transfer of the enolpyruvyl moiety of phosphoenolpyruvate (PEP) to the 5-hydroxyl of shikimate-3-phosphate (S3P) to produce enolpyruvyl shikimate-3-phosphate and inorganic phosphate. In Haemophilus influenzae (strain 86-028NP), this protein is 3-phosphoshikimate 1-carboxyvinyltransferase.